The chain runs to 461 residues: Lysosomal dipeptide transporter MFSD1 (461 aa).

Basic and acidic residues predominate over residues 1–13 (MADREEHQGLLDG). The disordered stretch occupies residues 1 to 22 (MADREEHQGLLDGDRDEDEGDK). Residues 10 to 11 (LL) carry the Dileucine internalization motif motif. Helical transmembrane passes span 37–57 (LLHR…SYFC), 81–101 (QLYA…GFLL), 111–131 (TVIF…GALA), 134–154 (FWLM…LAVA), 264–284 (LWLI…FIGL), 302–322 (AINS…GFLV), 331–351 (WVML…FTFW), 359–379 (LLGV…AFVV), 390–410 (FMQS…GSIL), and 416–436 (LFLE…VVLL).

This sequence belongs to the major facilitator superfamily. In terms of assembly, homodimer. Interacts with lysosomal protein GLMP (via lumenal domain); the interaction starts while both proteins are still in the endoplasmic reticulum and is required for stabilization of MFSD1 in lysosomes but has no direct effect on its targeting to lysosomes or transporter activity.

The protein localises to the lysosome membrane. It catalyses the reaction L-alpha-aminoacyl-L-arginine(out) = L-alpha-aminoacyl-L-arginine(in). It carries out the reaction L-arginyl-L-alpha-amino acid(out) = L-arginyl-L-alpha-amino acid(in). The enzyme catalyses L-arginyl-glycine(out) = L-arginyl-glycine(in). The catalysed reaction is L-alpha-aminoacyl-L-lysine(out) = L-alpha-aminoacyl-L-lysine(in). It catalyses the reaction L-aspartyl-L-lysine(out) = L-aspartyl-L-lysine(in). It carries out the reaction L-alanyl-L-lysine(out) = L-alanyl-L-lysine(in). The enzyme catalyses L-lysyl-L-alpha-amino acid(out) = L-lysyl-L-alpha-amino acid(in). The catalysed reaction is L-lysyl-L-alanine(out) = L-lysyl-L-alanine(in). It catalyses the reaction L-lysyl-L-lysine(out) = L-lysyl-L-lysine(in). It carries out the reaction L-lysyl-glycine(out) = L-lysyl-glycine(in). The enzyme catalyses L-alpha-aminoacyl-L-histidine(out) = L-alpha-aminoacyl-L-histidine(in). The catalysed reaction is L-histidyl-L-alpha-amino acid(out) = L-histidyl-L-alpha-amino acid(in). It catalyses the reaction L-histidyl-glycine(out) = L-histidyl-glycine(in). Its function is as follows. Lysosomal dipeptide uniporter that selectively exports lysine, arginine or histidine-containing dipeptides with a net positive charge from the lysosome lumen into the cytosol. Could play a role in a specific type of protein O-glycosylation indirectly regulating macrophages migration and tissue invasion. Also essential for liver homeostasis. In Danio rerio (Zebrafish), this protein is Lysosomal dipeptide transporter MFSD1 (mfsd1).